The chain runs to 456 residues: IQ domain-containing protein IQM3 (456 aa).

One can recognise an IQ domain in the interval 46-75 (TRLAAVKVQKVYRSYRTRRRLADSVVVAEE). Positions 315-358 (SEDSDSYDDYVKSNGGSEPEPLKKEDTTFQAETETDENGNGTVG) are disordered.

As to expression, expressed in roots, rosette and cauline leaves, flowers and siliques, and at lower levels in stems.

It localises to the cytoplasm. Its subcellular location is the nucleus. In terms of biological role, may be involved in biotic and abiotic stress responses. The sequence is that of IQ domain-containing protein IQM3 from Arabidopsis thaliana (Mouse-ear cress).